Here is a 508-residue protein sequence, read N- to C-terminus: ATP synthase subunit alpha (508 aa).

Residue 170 to 177 (GDRQTGKT) coordinates ATP.

It belongs to the ATPase alpha/beta chains family. In terms of assembly, F-type ATPases have 2 components, CF(1) - the catalytic core - and CF(0) - the membrane proton channel. CF(1) has five subunits: alpha(3), beta(3), gamma(1), delta(1), epsilon(1). CF(0) has three main subunits: a(1), b(2) and c(9-12). The alpha and beta chains form an alternating ring which encloses part of the gamma chain. CF(1) is attached to CF(0) by a central stalk formed by the gamma and epsilon chains, while a peripheral stalk is formed by the delta and b chains.

It localises to the cell inner membrane. It carries out the reaction ATP + H2O + 4 H(+)(in) = ADP + phosphate + 5 H(+)(out). Its function is as follows. Produces ATP from ADP in the presence of a proton gradient across the membrane. The alpha chain is a regulatory subunit. The sequence is that of ATP synthase subunit alpha from Dictyoglomus turgidum (strain DSM 6724 / Z-1310).